A 728-amino-acid chain; its full sequence is Fatty acid oxidation complex subunit alpha (728 aa).

Residues 1–189 (MLYQSETIQV…KNGLIDAVVP (189 aa)) form an enoyl-CoA hydratase/isomerase region. Substrate is bound at residue D296. Residues 311 to 728 (TIPEYAAVLG…TIAVSTGKTA (418 aa)) are 3-hydroxyacyl-CoA dehydrogenase. NAD(+) contacts are provided by residues M324, D343, 400 to 402 (VVE), K407, and S429. The active-site For 3-hydroxyacyl-CoA dehydrogenase activity is the H450. N453 provides a ligand contact to NAD(+). N500 and Y660 together coordinate substrate.

It in the N-terminal section; belongs to the enoyl-CoA hydratase/isomerase family. This sequence in the C-terminal section; belongs to the 3-hydroxyacyl-CoA dehydrogenase family. In terms of assembly, heterotetramer of two alpha chains (FadB) and two beta chains (FadA).

It carries out the reaction a (3S)-3-hydroxyacyl-CoA + NAD(+) = a 3-oxoacyl-CoA + NADH + H(+). The catalysed reaction is a (3S)-3-hydroxyacyl-CoA = a (2E)-enoyl-CoA + H2O. It catalyses the reaction a 4-saturated-(3S)-3-hydroxyacyl-CoA = a (3E)-enoyl-CoA + H2O. The enzyme catalyses (3S)-3-hydroxybutanoyl-CoA = (3R)-3-hydroxybutanoyl-CoA. It carries out the reaction a (3Z)-enoyl-CoA = a 4-saturated (2E)-enoyl-CoA. The catalysed reaction is a (3E)-enoyl-CoA = a 4-saturated (2E)-enoyl-CoA. It participates in lipid metabolism; fatty acid beta-oxidation. In terms of biological role, involved in the aerobic and anaerobic degradation of long-chain fatty acids via beta-oxidation cycle. Catalyzes the formation of 3-oxoacyl-CoA from enoyl-CoA via L-3-hydroxyacyl-CoA. It can also use D-3-hydroxyacyl-CoA and cis-3-enoyl-CoA as substrate. The sequence is that of Fatty acid oxidation complex subunit alpha from Photorhabdus laumondii subsp. laumondii (strain DSM 15139 / CIP 105565 / TT01) (Photorhabdus luminescens subsp. laumondii).